Here is a 205-residue protein sequence, read N- to C-terminus: Colicin-E8 (205 aa).

2 disordered regions span residues 24 to 109 (AQTD…PDRI) and 136 to 187 (PELS…VYDM). 3 stretches are compositionally biased toward basic and acidic residues: residues 53–76 (QERR…ESKR), 88–99 (PVGDKWLDDAGK), and 159–178 (RNKD…DKPI). Positions 173, 198, and 202 each coordinate Zn(2+).

Belongs to the colicin/pyosin nuclease family.

Its function is as follows. This plasmid-coded bactericidal protein is an endonuclease active on both single- and double-stranded DNA but with undefined specificity. Colicins are polypeptide toxins produced by and active against E.coli and closely related bacteria. In Escherichia coli, this protein is Colicin-E8 (col).